A 525-amino-acid chain; its full sequence is Chromosomal replication initiator protein DnaA (525 aa).

The tract at residues 1–71 is domain I, interacts with DnaA modulators; it reads MNDFWQHCSA…SDLAREFWNT (71 aa). Positions 71 to 188 are domain II; that stretch reads TPIEVQFVLD…GEADSMYERS (118 aa). Residues 162–182 form a disordered region; the sequence is AGRRTWRPGPGAAPANGGEAD. Residues 169 to 181 are compositionally biased toward low complexity; sequence PGPGAAPANGGEA. The domain III, AAA+ region stretch occupies residues 189–405; the sequence is KLNPVLTFDN…GALRKILAYS (217 aa). Gly-233, Gly-235, Lys-236, and Thr-237 together coordinate ATP. The tract at residues 406-525 is domain IV, binds dsDNA; the sequence is KFHGREISIE…LHVLEQTLKG (120 aa).

Belongs to the DnaA family. In terms of assembly, oligomerizes as a right-handed, spiral filament on DNA at oriC.

It localises to the cytoplasm. Its function is as follows. Plays an essential role in the initiation and regulation of chromosomal replication. ATP-DnaA binds to the origin of replication (oriC) to initiate formation of the DNA replication initiation complex once per cell cycle. Binds the DnaA box (a 9 base pair repeat at the origin) and separates the double-stranded (ds)DNA. Forms a right-handed helical filament on oriC DNA; dsDNA binds to the exterior of the filament while single-stranded (ss)DNA is stabiized in the filament's interior. The ATP-DnaA-oriC complex binds and stabilizes one strand of the AT-rich DNA unwinding element (DUE), permitting loading of DNA polymerase. After initiation quickly degrades to an ADP-DnaA complex that is not apt for DNA replication. Binds acidic phospholipids. The protein is Chromosomal replication initiator protein DnaA of Burkholderia cenocepacia (strain HI2424).